The chain runs to 419 residues: Serine hydroxymethyltransferase (419 aa).

(6S)-5,6,7,8-tetrahydrofolate-binding positions include L120 and 124 to 126 (GHL). The residue at position 229 (K229) is an N6-(pyridoxal phosphate)lysine.

This sequence belongs to the SHMT family. In terms of assembly, homodimer. Pyridoxal 5'-phosphate serves as cofactor.

It localises to the cytoplasm. The catalysed reaction is (6R)-5,10-methylene-5,6,7,8-tetrahydrofolate + glycine + H2O = (6S)-5,6,7,8-tetrahydrofolate + L-serine. Its pathway is one-carbon metabolism; tetrahydrofolate interconversion. The protein operates within amino-acid biosynthesis; glycine biosynthesis; glycine from L-serine: step 1/1. Its function is as follows. Catalyzes the reversible interconversion of serine and glycine with tetrahydrofolate (THF) serving as the one-carbon carrier. This reaction serves as the major source of one-carbon groups required for the biosynthesis of purines, thymidylate, methionine, and other important biomolecules. Also exhibits THF-independent aldolase activity toward beta-hydroxyamino acids, producing glycine and aldehydes, via a retro-aldol mechanism. In Herpetosiphon aurantiacus (strain ATCC 23779 / DSM 785 / 114-95), this protein is Serine hydroxymethyltransferase.